The chain runs to 625 residues: TRAF3-interacting protein 1 (625 aa).

The tract at residues 1-322 (MNAAVVRRTQ…RKLSDGSFKD (322 aa)) is abolishes microtubules binding when missing. A disordered region spans residues 130-439 (AGDKGDSRGR…DSQNSDNEDD (310 aa)). A compositionally biased stretch (polar residues) spans 141–152 (QRTSKAQEPNNK). Residues 153-327 (SGKEEESRIH…GSFKDVKAEM (175 aa)) show a composition bias toward basic and acidic residues. The tract at residues 229–625 (RAKDRDRNNR…VHSINLSSRR (397 aa)) is DISC1-interaction domain. Ser-316 and Ser-409 each carry phosphoserine. The segment covering 420 to 434 (SGKTVSSVIIDSQNS) has biased composition (polar residues). Residues 472–600 (GLVKKILETK…IRDQQDKICA (129 aa)) adopt a coiled-coil conformation.

This sequence belongs to the TRAF3IP1 family. In terms of assembly, interacts with IL13RA1. Binds to microtubules, TRAF3 and DISC1. Component of the IFT complex B, at least composed of IFT20, IFT22, IFT25, IFT27, IFT46, IFT52, TRAF3IP1/IFT54, IFT57, IFT74, IFT80, IFT81, and IFT88. Interacts with IFT88. Interacts with MAP4.

The protein resides in the cytoplasm. The protein localises to the cytoskeleton. Its subcellular location is the cell projection. It is found in the cilium. It localises to the cilium axoneme. The protein resides in the cilium basal body. Its function is as follows. Plays an inhibitory role on IL13 signaling by binding to IL13RA1. Involved in suppression of IL13-induced STAT6 phosphorylation, transcriptional activity and DNA-binding. Recruits TRAF3 and DISC1 to the microtubules. Involved in epithelial morphogenesis and in the regulation of microtubule cytoskeleton organization. Is a negative regulator of microtubule stability, acting through the control of MAP4 levels. Involved in ciliogenesis. The chain is TRAF3-interacting protein 1 (Traf3ip1) from Mus musculus (Mouse).